A 473-amino-acid polypeptide reads, in one-letter code: Ribonuclease Y (473 aa).

Residues 4–24 (LIAFIILLILFVLLITIVPVV) form a helical membrane-spanning segment. In terms of domain architecture, KH spans 158–218 (SLFNIDIIDE…IRREIARIVM (61 aa)). The region spanning 285–378 (ILSHSLEVAE…VKIVDTLSAA (94 aa)) is the HD domain.

It belongs to the RNase Y family.

The protein resides in the cell membrane. Functionally, endoribonuclease that initiates mRNA decay. The polypeptide is Ribonuclease Y (Ureaplasma parvum serovar 3 (strain ATCC 27815 / 27 / NCTC 11736)).